A 366-amino-acid polypeptide reads, in one-letter code: MITLQRTPLFDVYAKYGGKTIDFGGWELPVQFSSIKEEHEAVRTAAGLFDVSHMGEVEVKGVDSLAFLQRVVTNDVSTLKVGGAQYTAMCYENGGTVDDLLIYKRGEEDYLLVINASNIEKDYEWLASHVIGDATVVNVSSEVAQLAIQGPKAEGILQKVVSEDLKEIKFFKFKNDILVDGIPALVSRTGYTGEDGFEIYCKSEDAAKLWEKLLEVGAEEGLKACGLGARDTLRFEATLPLYGQELSKDITPIEAGIGFAVKPNKEADFFGKATLKEQKENGAPRKLVGIEVIERGIPRTHYPVFIGEEKIGEVTSGTQSPTLKKSIGLALIDVKYAAVDTEVEIEIRNKRVKAVVVPTPFYKRSK.

It belongs to the GcvT family. As to quaternary structure, the glycine cleavage system is composed of four proteins: P, T, L and H.

It catalyses the reaction N(6)-[(R)-S(8)-aminomethyldihydrolipoyl]-L-lysyl-[protein] + (6S)-5,6,7,8-tetrahydrofolate = N(6)-[(R)-dihydrolipoyl]-L-lysyl-[protein] + (6R)-5,10-methylene-5,6,7,8-tetrahydrofolate + NH4(+). In terms of biological role, the glycine cleavage system catalyzes the degradation of glycine. The chain is Aminomethyltransferase from Bacillus cereus (strain 03BB102).